A 223-amino-acid polypeptide reads, in one-letter code: Transcriptional regulatory protein HprR (223 aa).

A Response regulatory domain is found at 2-115 (KILLIEDNQR…ELLARVRAQL (114 aa)). Asp51 bears the 4-aspartylphosphate mark. The ompR/PhoB-type DNA-binding region spans 122 to 220 (NSTLEISGLR…IRGMGYSFVA (99 aa)).

Post-translationally, phosphorylated by HprS.

Its subcellular location is the cytoplasm. Functionally, member of a two-component regulatory system HprR/HprS involved in response to hydrogen peroxide. Regulates the expression of at least 5 operons, cyoABCDE, hprRS, hiuH, cusRS and cusCFBA. Bifunctional regulator that acts as an activator and a repressor. The chain is Transcriptional regulatory protein HprR from Escherichia coli (strain K12).